The following is a 106-amino-acid chain: MIKSELVQRIAEHNPHLYQRDVENIVNAILEEIVSALARGDRVELRGFGAFSVKHRPARAGRNPRTGEHVPVEQKSVPFFKTGKEMRERLNRDGLDGATPPSPPAA.

The segment at Pro-57–Ala-106 is disordered. A compositionally biased stretch (basic and acidic residues) spans Thr-82–Leu-95.

The protein belongs to the bacterial histone-like protein family. As to quaternary structure, heterodimer of an alpha and a beta chain.

Functionally, this protein is one of the two subunits of integration host factor, a specific DNA-binding protein that functions in genetic recombination as well as in transcriptional and translational control. The sequence is that of Integration host factor subunit beta from Afipia carboxidovorans (strain ATCC 49405 / DSM 1227 / KCTC 32145 / OM5) (Oligotropha carboxidovorans).